The sequence spans 905 residues: Patched domain-containing protein 3 (905 aa).

Residues 1-67 (MISSKVAPGE…PVGQEAPPPR (67 aa)) form a disordered region. Residues 94 to 114 (WLFLLGPVLLTASLGTGLIFL) traverse the membrane as a helical segment. N-linked (GlcNAc...) asparagine glycosylation is found at N146, N199, N229, and N233. 6 helical membrane passes run 337 to 357 (TVIP…VVSC), 369 to 389 (VAVF…GLML), 391 to 411 (IGVP…GVGV), 441 to 461 (VAVS…TGIT), 475 to 495 (GTTL…IMAL), and 558 to 578 (FIVV…CFQV). Residues 338–495 (VIPLFHLAYI…ITCFGAIMAL (158 aa)) enclose the SSD domain. 3 N-linked (GlcNAc...) asparagine glycosylation sites follow: N647, N661, and N692. 5 consecutive transmembrane segments (helical) span residues 759-779 (VMIA…HPVC), 781-801 (LWVT…MAFW), 813-833 (LVIC…AFVS), 849-869 (LLGY…CVLA), and 882-902 (IMFL…PVFL).

This sequence belongs to the patched family. Expressed in germ cells of the testis (at protein level).

It localises to the cell projection. The protein localises to the cilium. It is found in the flagellum membrane. The protein resides in the endoplasmic reticulum membrane. In terms of biological role, may play a role in sperm development or sperm function. However, does not appear to have an essential role in spermatogenesis or male fertility. This Rattus norvegicus (Rat) protein is Patched domain-containing protein 3.